A 722-amino-acid chain; its full sequence is Serine/threonine-protein kinase MARK2 (722 aa).

The tract at residues 1-46 is disordered; sequence MSSARTPLPTLNERDTEQPTLGHLDSKPSSKSNMLRGRNSATSADE. The segment covering 27 to 45 has biased composition (polar residues); sequence KPSSKSNMLRGRNSATSAD. At serine 40 the chain carries Phosphoserine. A Protein kinase domain is found at 53-304; it reads YRLLKTIGKG…LEQIMKDRWM (252 aa). The residue at position 58 (threonine 58) is a Phosphothreonine; by autocatalysis. ATP is bound by residues 59 to 67 and lysine 82; that span reads IGKGNFAKV. Phosphoserine; by CaMK1 occurs at positions 91, 92, and 93. The active-site Proton acceptor is aspartate 175. Threonine 208 bears the Phosphothreonine; by LKB1 and TAOK1 mark. Serine 212 carries the phosphoserine; by GSK3-beta modification. Serine 274 is subject to Phosphoserine; by autocatalysis. Threonine 275 carries the post-translational modification Phosphothreonine; by autocatalysis. Phosphothreonine; by CaMK1 is present on threonine 294. In terms of domain architecture, UBA spans 323-362; it reads YKDPRRTELMVSMGYTREEIQDSLVGQRYNEVMATYLLLG. The interval 373–576 is disordered; that stretch reads ITLKPRPSAD…SQGRRGASGS (204 aa). Phosphoserine occurs at positions 408 and 409. A compositionally biased stretch (polar residues) spans 417 to 431; sequence PTSNSYSKKTQSNNA. A compositionally biased stretch (basic and acidic residues) spans 432-442; the sequence is ENKRPEEETGR. Serine 453 bears the Phosphoserine mark. Phosphothreonine is present on threonine 464. Polar residues predominate over residues 464–483; that stretch reads TPTPSTNSVLSTSTNRSRNS. 2 positions are modified to phosphoserine: serine 483 and serine 490. Residues 492-505 are compositionally biased toward polar residues; it reads GQASIQNGKDSTAP. The span at 511–524 shows a compositional bias: low complexity; sequence ASPSAHNISSSSGA. 3 positions are modified to phosphoserine: serine 512, serine 514, and serine 535. Phosphothreonine; by PKC/PRKCZ is present on threonine 539. 2 positions are modified to phosphoserine: serine 562 and serine 656. In terms of domain architecture, KA1 spans 673-722; sequence TPGHENFVQWEMEVCKLPRLSLNGVRFKRISGTSMAFKNIASKIANELKL.

It belongs to the protein kinase superfamily. CAMK Ser/Thr protein kinase family. SNF1 subfamily. Homodimer. Interacts (when phosphorylated at Thr-539) with YWHAZ. Interacts with MTCL1; the interaction is direct and increases MARK2 microtubule-binding ability. Interacts with PAK5; leading to inhibit the protein kinase activity. Interacts with MAPT/TAU. Interacts with YWHAB, YWHAG and YWHAQ. It depends on Mg(2+) as a cofactor. Autophosphorylated. Phosphorylated at Thr-208 by STK11/LKB1 in complex with STE20-related adapter-alpha (STRADA) pseudo kinase and CAB39. Phosphorylation at Thr-208 by TAOK1 activates the kinase activity, leading to phosphorylation and detachment of MAPT/TAU from microtubules. Phosphorylation at Ser-212 by GSK3-beta (GSK3B) inhibits the kinase activity. Phosphorylation by CaMK1 promotes activity and is required to promote neurite outgrowth. Phosphorylation at Thr-539 by PRKCZ/aPKC in polarized epithelial cells inhibits the kinase activity and promotes binding to 14-3-3 protein YWHAZ, leading to relocation from cell membrane to cytoplasm.

The protein localises to the cell membrane. It localises to the lateral cell membrane. It is found in the cytoplasm. The protein resides in the cytoskeleton. Its subcellular location is the cell projection. The protein localises to the dendrite. The catalysed reaction is L-seryl-[protein] + ATP = O-phospho-L-seryl-[protein] + ADP + H(+). The enzyme catalyses L-threonyl-[protein] + ATP = O-phospho-L-threonyl-[protein] + ADP + H(+). It catalyses the reaction L-seryl-[tau protein] + ATP = O-phospho-L-seryl-[tau protein] + ADP + H(+). It carries out the reaction L-threonyl-[tau protein] + ATP = O-phospho-L-threonyl-[tau protein] + ADP + H(+). With respect to regulation, inhibited by hymenialdisine. Activated by phosphorylation on Thr-208 by STK11/LKB1 and TAOK1. Inhibited by phosphorylation at Ser-212 or Thr-539. Inhibited by PAK5; inhibition is independent of the kinase activity of PAK5. Serine/threonine-protein kinase. Involved in cell polarity and microtubule dynamics regulation. Phosphorylates CRTC2/TORC2, DCX, HDAC7, KIF13B, MAP2, MAP4 and RAB11FIP2. Phosphorylates the microtubule-associated protein MAPT/TAU. Plays a key role in cell polarity by phosphorylating the microtubule-associated proteins MAP2, MAP4 and MAPT/TAU at KXGS motifs, causing detachment from microtubules, and their disassembly. Regulates epithelial cell polarity by phosphorylating RAB11FIP2. Involved in the regulation of neuronal migration through its dual activities in regulating cellular polarity and microtubule dynamics, possibly by phosphorylating and regulating DCX. Regulates axogenesis by phosphorylating KIF13B, promoting interaction between KIF13B and 14-3-3 and inhibiting microtubule-dependent accumulation of KIF13B. Also required for neurite outgrowth and establishment of neuronal polarity. Regulates localization and activity of some histone deacetylases by mediating phosphorylation of HDAC7, promoting subsequent interaction between HDAC7 and 14-3-3 and export from the nucleus. Also acts as a positive regulator of the Wnt signaling pathway, probably by mediating phosphorylation of dishevelled proteins (DVL1, DVL2 and/or DVL3). Modulates the developmental decision to build a columnar versus a hepatic epithelial cell apparently by promoting a switch from a direct to a transcytotic mode of apical protein delivery. Essential for the asymmetric development of membrane domains of polarized epithelial cells. The sequence is that of Serine/threonine-protein kinase MARK2 from Rattus norvegicus (Rat).